The following is a 237-amino-acid chain: Proteasome subunit beta 2 (237 aa).

The span at 1-14 (MNNWSQGSTPQGSD) shows a compositional bias: polar residues. The propeptide at 1–42 (MNNWSQGSTPQGSDPSPYAPELGSLPDGSQSDDHGDTVNKTG) is removed in mature form; by autocatalysis. Residues 1 to 45 (MNNWSQGSTPQGSDPSPYAPELGSLPDGSQSDDHGDTVNKTGTTT) form a disordered region. Threonine 43 serves as the catalytic Nucleophile.

It belongs to the peptidase T1B family. As to quaternary structure, the 20S proteasome core is composed of 14 alpha and 14 beta subunits that assemble into four stacked heptameric rings, resulting in a barrel-shaped structure. The two inner rings, each composed of seven catalytic beta subunits, are sandwiched by two outer rings, each composed of seven alpha subunits. The catalytic chamber with the active sites is on the inside of the barrel. Has a gated structure, the ends of the cylinder being occluded by the N-termini of the alpha-subunits. Is capped at one or both ends by the proteasome regulatory ATPase, PAN.

Its subcellular location is the cytoplasm. It catalyses the reaction Cleavage of peptide bonds with very broad specificity.. The formation of the proteasomal ATPase PAN-20S proteasome complex, via the docking of the C-termini of PAN into the intersubunit pockets in the alpha-rings, triggers opening of the gate for substrate entry. Interconversion between the open-gate and close-gate conformations leads to a dynamic regulation of the 20S proteasome proteolysis activity. Functionally, component of the proteasome core, a large protease complex with broad specificity involved in protein degradation. The chain is Proteasome subunit beta 2 from Haloterrigena turkmenica (strain ATCC 51198 / DSM 5511 / JCM 9101 / NCIMB 13204 / VKM B-1734 / 4k) (Halococcus turkmenicus).